Consider the following 520-residue polypeptide: GMP synthase [glutamine-hydrolyzing] (520 aa).

Residues 12–205 (KIIVLDYGSQ…AISICGARGD (194 aa)) form the Glutamine amidotransferase type-1 domain. Cys-89 serves as the catalytic Nucleophile. Catalysis depends on residues His-179 and Glu-181. The 190-residue stretch at 206-395 (WSMDNFIDME…LGMPEEIVWR (190 aa)) folds into the GMPS ATP-PPase domain. Residue 233–239 (SGGVDSS) participates in ATP binding.

As to quaternary structure, homodimer.

The catalysed reaction is XMP + L-glutamine + ATP + H2O = GMP + L-glutamate + AMP + diphosphate + 2 H(+). The protein operates within purine metabolism; GMP biosynthesis; GMP from XMP (L-Gln route): step 1/1. In terms of biological role, catalyzes the synthesis of GMP from XMP. This is GMP synthase [glutamine-hydrolyzing] from Streptococcus pyogenes serotype M6 (strain ATCC BAA-946 / MGAS10394).